A 271-amino-acid chain; its full sequence is Tryptophan synthase alpha chain (271 aa).

Residues Glu49 and Asp60 each act as proton acceptor in the active site.

It belongs to the TrpA family. In terms of assembly, tetramer of two alpha and two beta chains.

The catalysed reaction is (1S,2R)-1-C-(indol-3-yl)glycerol 3-phosphate + L-serine = D-glyceraldehyde 3-phosphate + L-tryptophan + H2O. The protein operates within amino-acid biosynthesis; L-tryptophan biosynthesis; L-tryptophan from chorismate: step 5/5. In terms of biological role, the alpha subunit is responsible for the aldol cleavage of indoleglycerol phosphate to indole and glyceraldehyde 3-phosphate. The sequence is that of Tryptophan synthase alpha chain from Aromatoleum aromaticum (strain DSM 19018 / LMG 30748 / EbN1) (Azoarcus sp. (strain EbN1)).